The primary structure comprises 66 residues: Large ribosomal subunit protein bL33c (66 aa).

It belongs to the bacterial ribosomal protein bL33 family.

It localises to the plastid. The protein resides in the chloroplast. The polypeptide is Large ribosomal subunit protein bL33c (Chloranthus spicatus (Chulantree)).